The sequence spans 170 residues: Cytochrome b6-f complex subunit 4 (170 aa).

3 helical membrane-spanning segments follow: residues 36–56 (LLYI…GLAV), 95–115 (LLGV…PFLE), and 131–151 (TVFL…TLPI).

It belongs to the cytochrome b family. PetD subfamily. As to quaternary structure, the 4 large subunits of the cytochrome b6-f complex are cytochrome b6, subunit IV (17 kDa polypeptide, petD), cytochrome f and the Rieske protein, while the 4 small subunits are petG, petL, petM and petN. The complex functions as a dimer.

It localises to the plastid. Its subcellular location is the chloroplast thylakoid membrane. Component of the cytochrome b6-f complex, which mediates electron transfer between photosystem II (PSII) and photosystem I (PSI), cyclic electron flow around PSI, and state transitions. The sequence is that of Cytochrome b6-f complex subunit 4 from Nymphaea alba (White water-lily).